The following is a 114-amino-acid chain: MNKLIDEITKSQLNPDVPNFRPGDTVRVHAKVVEGTRERIQLFEGVVIKRRGAGISETFTVRKISNSVGVERTFPVHTPRIAKLEVIRRGKVRRAKLYYLRNLRGKAARIKEIR.

It belongs to the bacterial ribosomal protein bL19 family.

In terms of biological role, this protein is located at the 30S-50S ribosomal subunit interface and may play a role in the structure and function of the aminoacyl-tRNA binding site. This chain is Large ribosomal subunit protein bL19 (rplS), found in Listeria monocytogenes serovar 1/2a (strain ATCC BAA-679 / EGD-e).